A 179-amino-acid chain; its full sequence is Large ribosomal subunit protein uL6 (179 aa).

It belongs to the universal ribosomal protein uL6 family. In terms of assembly, part of the 50S ribosomal subunit.

Its function is as follows. This protein binds to the 23S rRNA, and is important in its secondary structure. It is located near the subunit interface in the base of the L7/L12 stalk, and near the tRNA binding site of the peptidyltransferase center. This Koribacter versatilis (strain Ellin345) protein is Large ribosomal subunit protein uL6.